The following is a 698-amino-acid chain: Elongation factor G (698 aa).

The tr-type G domain maps to 8–290 (ERYRNIGISA…AVIELLPSPV (283 aa)). Residues 17-24 (AHIDAGKT), 88-92 (DTPGH), and 142-145 (NKMD) contribute to the GTP site.

This sequence belongs to the TRAFAC class translation factor GTPase superfamily. Classic translation factor GTPase family. EF-G/EF-2 subfamily.

Its subcellular location is the cytoplasm. Its function is as follows. Catalyzes the GTP-dependent ribosomal translocation step during translation elongation. During this step, the ribosome changes from the pre-translocational (PRE) to the post-translocational (POST) state as the newly formed A-site-bound peptidyl-tRNA and P-site-bound deacylated tRNA move to the P and E sites, respectively. Catalyzes the coordinated movement of the two tRNA molecules, the mRNA and conformational changes in the ribosome. The polypeptide is Elongation factor G (Aromatoleum aromaticum (strain DSM 19018 / LMG 30748 / EbN1) (Azoarcus sp. (strain EbN1))).